A 185-amino-acid chain; its full sequence is Small ribosomal subunit protein uS4 (185 aa).

The S4 RNA-binding domain maps to 107-179 (RRLQTLVYRK…NGRRKRKNNH (73 aa)). The segment at 161-185 (NTPLTNPEINGRRKRKNNHAGKEDN) is disordered.

The protein belongs to the universal ribosomal protein uS4 family.

The polypeptide is Small ribosomal subunit protein uS4 (Entamoeba histolytica (strain ATCC 30459 / HM-1:IMSS / ABRM)).